A 62-amino-acid polypeptide reads, in one-letter code: Fungus-induced protein 1 (62 aa).

Residues 1 to 22 (MSQNLFQILLIFAILAALQVQG) form the signal peptide.

The chain is Fungus-induced protein 1 from Caenorhabditis briggsae.